The primary structure comprises 127 residues: Large ribosomal subunit protein bL17 (127 aa).

It belongs to the bacterial ribosomal protein bL17 family. In terms of assembly, part of the 50S ribosomal subunit. Contacts protein L32.

The sequence is that of Large ribosomal subunit protein bL17 from Xanthomonas oryzae pv. oryzae (strain KACC10331 / KXO85).